Reading from the N-terminus, the 141-residue chain is Cystatin (141 aa).

A signal peptide spans 1–26; that stretch reads MVHSQLPVAAPLRLLCALLLLPSATM. The region spanning 29–129 is the Cystatin domain; the sequence is GGLSPRSVTD…CHFQVWSRPW (101 aa). The Secondary area of contact motif lies at 73 to 77; the sequence is QVVAG. Intrachain disulfides connect Cys-91-Cys-107 and Cys-120-Cys-140.

Belongs to the cystatin family. In terms of tissue distribution, expressed at a low level by the venom gland (at protein level).

The protein localises to the secreted. Its function is as follows. Inhibits various C1 cysteine proteases including cathepsin L, papain and cathepsin B. This protein has no toxic activity and its function in the venom is unknown. It may play a role as a housekeeping or regulatory protein. This Oxyuranus scutellatus scutellatus (Australian taipan) protein is Cystatin.